We begin with the raw amino-acid sequence, 373 residues long: Securin (373 aa).

The span at 1 to 10 (MMPANEDKEN) shows a compositional bias: basic and acidic residues. The disordered stretch occupies residues 1-27 (MMPANEDKENNIVYTGNESSGINFPQT). Positions 12-26 (IVYTGNESSGINFPQ) are enriched in polar residues. The short motif at 85-88 (RLPL) is the D-box element. Residues 177–278 (ADSGKNEESS…LPYVPEGYSP (102 aa)) are disordered. Residues Ser185, Ser186, Ser212, and Ser213 each carry the phosphoserine modification. Residues 185–194 (SSDDDEGNED) are compositionally biased toward acidic residues. The span at 225–235 (LFNEQGGLQQL) shows a compositional bias: low complexity. Residues 240–256 (TKNEQKTKNDKSDKTDD) are compositionally biased toward basic and acidic residues. At Ser277 the chain carries Phosphoserine. Ser292 is modified (phosphoserine; by CDC28).

It belongs to the securin family. In terms of assembly, interacts with the caspase-like ESP1, and prevents its protease activity probably by covering its active site. Interacts with CDC20. Post-translationally, phosphorylated by CDC28. The phosphorylation may be important for ESP1 localization to the nucleus. Ubiquitinated by the anaphase promoting complex (APC) at the onset of anaphase, conducting to its degradation.

It localises to the cytoplasm. The protein resides in the nucleus. Functionally, regulatory protein, which plays a central role in chromosome stability. Probably acts by blocking the action of key proteins. During the mitosis, it blocks Separase/ESP1 function, preventing the proteolysis of the cohesin complex and the subsequent segregation of the chromosomes. At the onset of anaphase, it is ubiquitinated, conducting to its destruction and to the liberation of ESP1. The sequence is that of Securin (PDS1) from Saccharomyces cerevisiae (strain ATCC 204508 / S288c) (Baker's yeast).